The sequence spans 361 residues: Phosphoserine aminotransferase (361 aa).

An L-glutamate-binding site is contributed by Arg43. Residues 77 to 78 (AS), Trp103, Thr153, Asp173, and Gln196 contribute to the pyridoxal 5'-phosphate site. At Lys197 the chain carries N6-(pyridoxal phosphate)lysine. 238–239 (NT) provides a ligand contact to pyridoxal 5'-phosphate.

The protein belongs to the class-V pyridoxal-phosphate-dependent aminotransferase family. SerC subfamily. Homodimer. Pyridoxal 5'-phosphate serves as cofactor.

The protein localises to the cytoplasm. The catalysed reaction is O-phospho-L-serine + 2-oxoglutarate = 3-phosphooxypyruvate + L-glutamate. The enzyme catalyses 4-(phosphooxy)-L-threonine + 2-oxoglutarate = (R)-3-hydroxy-2-oxo-4-phosphooxybutanoate + L-glutamate. It functions in the pathway amino-acid biosynthesis; L-serine biosynthesis; L-serine from 3-phospho-D-glycerate: step 2/3. The protein operates within cofactor biosynthesis; pyridoxine 5'-phosphate biosynthesis; pyridoxine 5'-phosphate from D-erythrose 4-phosphate: step 3/5. Its function is as follows. Catalyzes the reversible conversion of 3-phosphohydroxypyruvate to phosphoserine and of 3-hydroxy-2-oxo-4-phosphonooxybutanoate to phosphohydroxythreonine. The protein is Phosphoserine aminotransferase of Pseudomonas entomophila (strain L48).